The primary structure comprises 341 residues: UDP-3-O-acylglucosamine N-acyltransferase (341 aa).

Catalysis depends on histidine 240, which acts as the Proton acceptor.

This sequence belongs to the transferase hexapeptide repeat family. LpxD subfamily. Homotrimer.

The enzyme catalyses a UDP-3-O-[(3R)-3-hydroxyacyl]-alpha-D-glucosamine + a (3R)-hydroxyacyl-[ACP] = a UDP-2-N,3-O-bis[(3R)-3-hydroxyacyl]-alpha-D-glucosamine + holo-[ACP] + H(+). The protein operates within bacterial outer membrane biogenesis; LPS lipid A biosynthesis. Functionally, catalyzes the N-acylation of UDP-3-O-acylglucosamine using 3-hydroxyacyl-ACP as the acyl donor. Is involved in the biosynthesis of lipid A, a phosphorylated glycolipid that anchors the lipopolysaccharide to the outer membrane of the cell. The polypeptide is UDP-3-O-acylglucosamine N-acyltransferase (Cellvibrio japonicus (strain Ueda107) (Pseudomonas fluorescens subsp. cellulosa)).